We begin with the raw amino-acid sequence, 89 residues long: Small ribosomal subunit protein uS15 (89 aa).

It belongs to the universal ribosomal protein uS15 family. In terms of assembly, part of the 30S ribosomal subunit. Forms a bridge to the 50S subunit in the 70S ribosome, contacting the 23S rRNA.

Functionally, one of the primary rRNA binding proteins, it binds directly to 16S rRNA where it helps nucleate assembly of the platform of the 30S subunit by binding and bridging several RNA helices of the 16S rRNA. Its function is as follows. Forms an intersubunit bridge (bridge B4) with the 23S rRNA of the 50S subunit in the ribosome. This is Small ribosomal subunit protein uS15 from Dictyoglomus turgidum (strain DSM 6724 / Z-1310).